A 454-amino-acid chain; its full sequence is UDP-N-acetylmuramoylalanine--D-glutamate ligase (454 aa).

Position 118-124 (118-124) interacts with ATP; sequence GTNGKTT.

It belongs to the MurCDEF family.

Its subcellular location is the cytoplasm. It carries out the reaction UDP-N-acetyl-alpha-D-muramoyl-L-alanine + D-glutamate + ATP = UDP-N-acetyl-alpha-D-muramoyl-L-alanyl-D-glutamate + ADP + phosphate + H(+). It participates in cell wall biogenesis; peptidoglycan biosynthesis. Its function is as follows. Cell wall formation. Catalyzes the addition of glutamate to the nucleotide precursor UDP-N-acetylmuramoyl-L-alanine (UMA). This Thermosynechococcus vestitus (strain NIES-2133 / IAM M-273 / BP-1) protein is UDP-N-acetylmuramoylalanine--D-glutamate ligase.